A 904-amino-acid polypeptide reads, in one-letter code: Protein abrupt (904 aa).

Residues M1–A15 show a composition bias toward polar residues. Disordered regions lie at residues M1 to V30 and G53 to Q72. Residues V103 to H168 form the BTB domain. The segment covering S204–N238 has biased composition (low complexity). 4 disordered regions span residues S204–P287, A349–Q390, L411–E438, and A451–S501. Polar residues predominate over residues K239–C253. Positions N254–S286 are enriched in low complexity. A compositionally biased stretch (basic and acidic residues) spans S429 to E438. The span at L452–N461 shows a compositional bias: polar residues. S474 is subject to Phosphoserine. Over residues P481–R500 the composition is skewed to basic and acidic residues. 2 C2H2-type zinc fingers span residues R544 to H567 and Y573 to H596. Disordered regions lie at residues E633–S696 and A832–T904. Gly residues predominate over residues G642–S655. The span at D671 to D682 shows a compositional bias: acidic residues. S837, S846, and S868 each carry phosphoserine. A compositionally biased stretch (basic and acidic residues) spans M851–S868. The segment covering D876–V886 has biased composition (polar residues). Phosphoserine is present on residues S889 and S896.

In terms of tissue distribution, expressed in CNS midline cells during embryonic stages 9-13. Expression also seen in cells of the stomagastric nervous system. Segmentally repeated stripes of ectodermal expression appear at stage 11 that become uniform by stage 12 and throughout embryogenesis. Expressed at variable levels in somatic muscles from stage 16 and in all imaginal disks during larval development. Expression is seen in da neurons that grow in two-dimensional dendrites underneath the epidermis during late embryonic, larval, and pupal stages.

It localises to the nucleus. Functionally, expression is vital for development; may be involved in transcriptional regulation. In embryos, muscle specific expression is required for segmental nerve b (SNb) motoneuron target recognition within ventral longitudinal muscles. Has a role in establishing and maintaining embryonic muscle attachments, adult sensory cell formation (macrochaetae) and morphogenesis of adult appendages (legs, antenna aristae and male external genitalia). Has a role in the morphogenesis of the class I dendritic neurons: selective expression of ab in class I da neurons plays a pivotal role in forming dendritic arbors, which are characteristic of the class I cells. The development of more complex arbors of class II-IV neurons depends on the absence of ab. This Drosophila melanogaster (Fruit fly) protein is Protein abrupt (ab).